The primary structure comprises 1542 residues: MSAAGVPAELNNLGAPITATTQNPSGLANSQVTSDPVPSATQHDEHRSSAGNTLADEEGDKSVDAEKVEAMYTGDSKQKRLPADSSEDIVAELEPHHVSVHRGKEEFAALERKYSTLSQQSQHELHRPTTRHSIRSSFSRKDRVVSRLTQDEAEKAKEGEGEFNLVQVLRSSRENQDEAGIKRKAVGVIWEDHEVIGAGGMRINIRNFSSAIIEQFMMPALKVLGIFGVNPFAPKPKNILYPSSGLLKPGEMCLVLGRPEAGCTTFLKTITNQRAGYMEIKGNVEYAGVGWKEMRKRYGGEVVYNQEDDDHLPTLTVAQTIRFALATKTPKKKIPGVSAKQFQDDMLDLLLSMLNIKHTANTIVGNAFVRGVSGGERKRVSIAEMFCSGATVCSWDNSTRGLDASTALDYAKSLRLLTDIMGQTTFVSLYQAGEGIYDQFDKVLVLNEGHVAYFGPAKEARQYMIGLGYRDLPRQTTADYLSGCTDVNERRFADGRDETNVPATPEEMGKAYRESEICARMNREREEYKQLMAEDATIREDFKQAVLEQKHKGVSKKSSYTVSFFQQIFIIFKRQLRLKFQDHFGISTGYATSIIIALIVGSVYFRLPETASGAFTRGGLLFLGLLFNALTSFSELPSQMLGRSVLYRQNEYRFYRPAAFAVASVLADVPYNASVIFLFSIVLYFMGGLYSSGGAFFIFYLFVFLTFMVMSAFFRTLGVATSDYNVAARLASVLISFMVTYTGYMIPVQQMKRWLFWIFYLNPLSYGYEAIFANEFSRIDLTCDSSYTIPRNVPQAGITGYPDTLGPNQMCSIFGSTPGNPNVSGSDYMAVGYSYYKTHIWRNFGILVGFFAFFMFLQMMFIEYLEQGAKHFSINVYKKEDKDLKAKNERLAERREAFRAGQLEQDLSELKMRPEPFTWEGLNYTVPIPGGHRQLLNDIYGYVKPGSLTALMGASGAGKTTLLDVLASRKNIGVIEGDILMNGRPIGTDFQRGCAYAEQQDTHEWTTTVREALQYSAYLRQPQHVPKQEKDDYVEDIIELLELQELADAMIGFPGYGLSVEARKRVTIGVELAAKPELLLFLDEPTSGLDGQSAYNIVRFLKKLCAAGQKILCTIHQPNALLFQSFDRLLLLQRGGECVYFGDIGPDSKVLIDYLERNGAKVPHDANPAEFMLEAIGAGSRKRIGSDWGEKWRNSPEFAEVKREIQELKAEALAKPVEEKSSRTEYATSFLFQLKTVLHRTNVALWRNADYQWTRLFAHLAIGLIVTLTFLQLDNSVQSLQYRVFAIFFATVLPALILAQIEPQYIMSRMTFNREASSKMYSSTVFALTQLLAEMPYSLGCAVSFFLLLYYGVGFPHASSRAGYFFLMILVTEIYAVTLGQAVAALSPTILIAALFNPFLLVLFSIFCGVTAPPPTLPYFWRKWMWPLDPFTRLISGLVSTVLQDQEVVCKDGEYQVFPAPSGQTCQQWAGAFAEAVGGYINNPDSTDDCQFCQYRTGQAFFIPLEISFSTRWRDFGIFICYVVFNILVLLIAARFLKWQRR.

Disordered stretches follow at residues 1 to 84 (MSAA…LPAD) and 118 to 141 (SQQS…FSRK). Polar residues predominate over residues 18–41 (TATTQNPSGLANSQVTSDPVPSAT). Residues 60–69 (DKSVDAEKVE) show a composition bias toward basic and acidic residues. 2 N-linked (GlcNAc...) asparagine glycosylation sites follow: Asn-207 and Asn-397. The ABC transporter 1 domain occupies 221-473 (LKVLGIFGVN…MIGLGYRDLP (253 aa)). 5 helical membrane-spanning segments follow: residues 584 to 604 (FGIS…GSVY), 618 to 638 (GGLL…ELPS), 669 to 689 (VPYN…MGGL), 694 to 714 (GAFF…SAFF), and 726 to 746 (VAAR…GYMI). Asn-822 carries an N-linked (GlcNAc...) asparagine glycan. Residues 844-864 (FGILVGFFAFFMFLQMMFIEY) form a helical membrane-spanning segment. In terms of domain architecture, ABC transporter 2 spans 917 to 1159 (FTWEGLNYTV…VLIDYLERNG (243 aa)). Residue Asn-923 is glycosylated (N-linked (GlcNAc...) asparagine). 953–960 (GASGAGKT) lines the ATP pocket. A run of 6 helical transmembrane segments spans residues 1253–1273 (WTRL…FLQL), 1284–1304 (VFAI…IEPQ), 1335–1355 (MPYS…GVGF), 1365–1385 (FFLM…AVAA), 1390–1410 (ILIA…FCGV), and 1516–1536 (FGIF…AARF).

It belongs to the ABC transporter superfamily. ABCG family. PDR (TC 3.A.1.205) subfamily.

The protein localises to the cell membrane. The catalysed reaction is itraconazole(in) + ATP + H2O = itraconazole(out) + ADP + phosphate + H(+). It catalyses the reaction voriconazole(in) + ATP + H2O = voriconazole(out) + ADP + phosphate + H(+). It carries out the reaction fluconazole(in) + ATP + H2O = fluconazole(out) + ADP + phosphate + H(+). Its function is as follows. Major pleiotropic ABC efflux transporter that confers resistance to structurally and functionally unrelated compounds including azoles such as fluconazole (FLC), itraconazole (ITC), posaconazole (POS), and voriconazole (VRC). Is also able to efflux the eukaryote protein synthesis inhibitor cycloheximide (CHX). The sequence is that of ABC multidrug transporter AFR1 from Cryptococcus deuterogattii (strain R265) (Cryptococcus gattii VGII (strain R265)).